A 106-amino-acid chain; its full sequence is Violacin-A (106 aa).

Residues 1–29 (MDAQKMKMVIGLVLVATTAFALMIPAASA) form the signal peptide. A propeptide spanning residues 30–79 (VDDFITRRAYDNLVKSGAIKDIPVMAKTIISNPVLEEGMLTYYTNKKLGD) is cleaved from the precursor. 3 cysteine pairs are disulfide-bonded: cysteine 84-cysteine 98, cysteine 88-cysteine 100, and cysteine 93-cysteine 105.

It belongs to the cyclotide family. Moebius subfamily. Violacin-A is not a cyclic peptide.

Its function is as follows. Probably participates in a plant defense mechanism. Has low hemolytic activity. The sequence is that of Violacin-A from Viola odorata (Sweet violet).